The chain runs to 284 residues: Probable O-methyltransferase ustE (284 aa).

N-linked (GlcNAc...) asparagine glycosylation is found at N22 and N29. 2 consecutive transmembrane segments (helical) span residues 88 to 108 (LLLLFMDILAAAKHFWFVLTV) and 157 to 177 (YLATGFIIFAVGLVTECVCEI). N-linked (GlcNAc...) asparagine glycosylation occurs at N205. Residues 215-235 (GLALASGGMIYGMSIAMFFMW) traverse the membrane as a helical segment. N-linked (GlcNAc...) asparagine glycosylation occurs at N264.

It belongs to the class VI-like SAM-binding methyltransferase superfamily. Isoprenylcysteine carboxyl methyltransferase family.

The protein localises to the membrane. Its pathway is secondary metabolite biosynthesis. Its function is as follows. Probable O-methyltransferase; part of the gene cluster that mediates the biosynthesis of ustilaginoidins, dimeric gamma-naphthopyrones isolated from different fungal species. The first step in the biosynthesis of ustilaginoidins is the production of gamma-naphthopyrone precursor YWA1 by the non-reducing polyketide synthase ustP, via condensation of one acetyl-CoA starter unit with 6 malonyl-CoA units. YWA1 is then probably substrate of the ustZ to yield norrubrofusarin via a dehydration reaction. A key enzyme in the biosynthetic pathway is the laccase ustL, which catalyzes the oxidative dimerization of norrubrofusarin to ustilaginoidin A. It can produce the M- and P-atropisomers in varying amounts, depending on the reaction conditions. For the biosynthesis of 3-methylustilaginoid in derivatives such as chaetochromin A, a methylated derivative of YWA1 is required. The C-methylation is considered to be catalyzed by ustM, the phosphopantetheine attachment site of which indicates that it acts on the growing polyketide chain before release of the product. For the biosynthesis of chaetochromin A, it is assumed that saturation of the D2 double bond takes place before dimerization, and is probably catalyzed by an external reductase because no candidate gene was identified within the cluster. The polypeptide is Probable O-methyltransferase ustE (Ustilaginoidea virens (Rice false smut fungus)).